We begin with the raw amino-acid sequence, 471 residues long: Monocarboxylate transporter 11 (471 aa).

Over residues 1 to 13 (MPAPQRKHRRGGF) the composition is skewed to basic residues. The disordered stretch occupies residues 1–31 (MPAPQRKHRRGGFSHRCFPTPQTAMTPQPAG). Residues 1-35 (MPAPQRKHRRGGFSHRCFPTPQTAMTPQPAGPPDG) lie on the Cytoplasmic side of the membrane. The segment covering 19-28 (PTPQTAMTPQ) has biased composition (low complexity). A run of 12 helical transmembrane segments spans residues 36–56 (GWGW…YGLL), 78–98 (AWIS…GSAL), 106–126 (PVVM…AFAS), 131–151 (LYLG…APAL), 163–183 (VLAV…LAPA), 198–218 (LLLG…LPLV), 243–263 (AFSI…VPYV), 273–293 (GLGG…DAGA), 312–332 (LAVF…VPVV), 333–353 (GGEE…GLSA), 367–389 (LVGV…LGGL), and 407–427 (ASFL…IGLP). Over 428–471 (RALPSCGPASPPATPPPETGELLPAPQAVLLSPGGPGSTLDTTC) the chain is Cytoplasmic.

The protein belongs to the major facilitator superfamily. Monocarboxylate porter (TC 2.A.1.13) family. In terms of assembly, interacts with isoform 2 of BSG. As to expression, expressed in liver, salivary gland and thyroid.

It localises to the endoplasmic reticulum membrane. The protein localises to the cell membrane. The catalysed reaction is pyruvate(out) + H(+)(out) = pyruvate(in) + H(+)(in). Its function is as follows. Proton-linked monocarboxylate transporter. It catalyzes the transport of pyruvate across the plasma membrane. Probably involved in hepatic lipid metabolism: overexpression results in an increase of triacylglycerol(TAG) levels, small increases in intracellular diacylglycerols and decreases in lysophosphatidylcholine, cholesterol ester and sphingomyelin lipids. This chain is Monocarboxylate transporter 11 (SLC16A11), found in Homo sapiens (Human).